The primary structure comprises 1403 residues: Protein FAM135B (1403 aa).

4 disordered regions span residues 445–483 (EKNLINQNSSSRKDIPLSTTEAPQLGSDEDVTRRPEVQE), 514–548 (EDECWTGPRPDAVKDSLTDTDICSRSPGPDEGQTP), 648–669 (REALDTKPSQPDHAEEPEDLSA), and 718–740 (RHAHHRNSLEGGHTESNTSLPSG). Residues 649-661 (EALDTKPSQPDHA) show a composition bias toward basic and acidic residues. Residues 731 to 740 (TESNTSLPSG) show a composition bias toward polar residues. Phosphoserine occurs at positions 775 and 776. The segment at 790–819 (TAGFSEDLDPSSKENSPPRHTSLSYGGSRV) is disordered. Positions 802–814 (KENSPPRHTSLSY) are enriched in polar residues.

The protein belongs to the FAM135 family.

The protein is Protein FAM135B (Fam135b) of Mus musculus (Mouse).